The sequence spans 86 residues: Probable weak neurotoxin NNAM2 (86 aa).

Positions 1–21 (MKTLLLTLVVVTIVCLDLGYT) are cleaved as a signal peptide. 5 disulfides stabilise this stretch: cysteine 24-cysteine 45, cysteine 27-cysteine 32, cysteine 38-cysteine 63, cysteine 67-cysteine 78, and cysteine 79-cysteine 84.

It belongs to the three-finger toxin family. Ancestral subfamily. Orphan group II sub-subfamily. As to expression, expressed by the venom gland.

The protein localises to the secreted. In terms of biological role, binds with low affinity to muscular (alpha-1-beta-1-delta-epsilon/CHRNA1-CHRNB1-CHRND-CHRNE) and very low affinity to neuronal (alpha-7/CHRNA7) nicotinic acetylcholine receptor (nAChR). This chain is Probable weak neurotoxin NNAM2, found in Naja atra (Chinese cobra).